Here is a 250-residue protein sequence, read N- to C-terminus: 2,5-dichloro-2,5-cyclohexadiene-1,4-diol dehydrogenase (250 aa).

An NAD(+)-binding site is contributed by 9–34; that stretch reads IIVTGGGSGIGRATVELLVASGANVA. A substrate-binding site is contributed by Ser-141. Residue Tyr-154 is the Proton acceptor of the active site.

The protein belongs to the short-chain dehydrogenases/reductases (SDR) family.

It carries out the reaction 2,5-dichlorocyclohexa-2,5-dien-1,4-diol + NAD(+) = 2,5-dichlorohydroquinone + NADH + H(+). The protein operates within xenobiotic degradation; gamma-hexachlorocyclohexane degradation. Functionally, catalyzes the dehydrogenation of 2,5-dichloro-2,5-cyclohexadiene-1,4-diol (2,5-DDOL) to 2,5-dichlorohydroquinone (2,5-DCHQ), a step in the degradation of gamma-hexachlorocyclohexane (gamma-HCH or lindane). This is 2,5-dichloro-2,5-cyclohexadiene-1,4-diol dehydrogenase from Sphingobium indicum (strain DSM 16412 / CCM 7286 / MTCC 6364 / B90A).